A 629-amino-acid polypeptide reads, in one-letter code: uncharacterized protein (629 aa).

Polar residues predominate over residues 1-11 (MSDDQQNGKQN). Disordered regions lie at residues 1–24 (MSDD…EQDD), 62–87 (SNNN…SNYN), 197–464 (SEES…SSLI), and 493–560 (PTPT…STPD). Low complexity predominate over residues 247–264 (PSSSSSSSSLINSPTTSK). Polar residues predominate over residues 274–288 (PTINPKSLFGLSSTI). Residues 294 to 430 (VKTEKEKEKE…DETLNKETPH (137 aa)) show a composition bias toward basic and acidic residues. 2 stretches are compositionally biased toward low complexity: residues 434–464 (PHIT…SSLI) and 493–554 (PTPT…NNNN).

This is an uncharacterized protein from Dictyostelium discoideum (Social amoeba).